Reading from the N-terminus, the 405-residue chain is GTPase Obg (405 aa).

The Obg domain maps to 1–159 (MRFIDEAVVT…KVLKFELKVV (159 aa)). In terms of domain architecture, OBG-type G spans 160–333 (ADVGLIGLPN…IKYHLMNEIE (174 aa)). GTP is bound by residues 166-173 (GLPNAGKS), 191-195 (FTTLV), 213-216 (DIPG), 283-286 (NKID), and 314-316 (ATL). Mg(2+)-binding residues include Ser173 and Thr193. Residues 371-382 (YRAARKAAREGT) are compositionally biased toward basic and acidic residues. The tract at residues 371–405 (YRAARKAAREGTDLSDDDFDDSDDDDDGVEVVYAP) is disordered. Positions 383–399 (DLSDDDFDDSDDDDDGV) are enriched in acidic residues.

It belongs to the TRAFAC class OBG-HflX-like GTPase superfamily. OBG GTPase family. Monomer. The cofactor is Mg(2+).

It is found in the cytoplasm. In terms of biological role, an essential GTPase which binds GTP, GDP and possibly (p)ppGpp with moderate affinity, with high nucleotide exchange rates and a fairly low GTP hydrolysis rate. Plays a role in control of the cell cycle, stress response, ribosome biogenesis and in those bacteria that undergo differentiation, in morphogenesis control. This chain is GTPase Obg, found in Psychrobacter cryohalolentis (strain ATCC BAA-1226 / DSM 17306 / VKM B-2378 / K5).